Consider the following 886-residue polypeptide: Translation initiation factor IF-2 (886 aa).

Disordered stretches follow at residues 46-91 and 121-297; these read LDHL…VEVR and EQQK…HGFT. Positions 72 to 82 are enriched in polar residues; sequence STLSVTGSTGK. Basic and acidic residues-rich tracts occupy residues 130-163, 175-239, and 246-260; these read AELK…AERK, AKSE…DHHL, and REAE…EQGT. The region spanning 386-555 is the tr-type G domain; that stretch reads PRAPVVTVMG…LNQSELLELT (170 aa). The tract at residues 395–402 is G1; sequence GHVDHGKT. 395–402 provides a ligand contact to GTP; that stretch reads GHVDHGKT. Residues 420-424 form a G2 region; it reads GITQH. Residues 441-444 form a G3 region; that stretch reads DTPG. GTP contacts are provided by residues 441-445 and 495-498; these read DTPGH and NKMD. The tract at residues 495-498 is G4; it reads NKMD. The segment at 531–533 is G5; the sequence is SAK.

It belongs to the TRAFAC class translation factor GTPase superfamily. Classic translation factor GTPase family. IF-2 subfamily.

It is found in the cytoplasm. One of the essential components for the initiation of protein synthesis. Protects formylmethionyl-tRNA from spontaneous hydrolysis and promotes its binding to the 30S ribosomal subunits. Also involved in the hydrolysis of GTP during the formation of the 70S ribosomal complex. This Pseudoalteromonas translucida (strain TAC 125) protein is Translation initiation factor IF-2.